Consider the following 119-residue polypeptide: Large ribosomal subunit protein uL24 (119 aa).

This sequence belongs to the universal ribosomal protein uL24 family. As to quaternary structure, part of the 50S ribosomal subunit.

In terms of biological role, one of two assembly initiator proteins, it binds directly to the 5'-end of the 23S rRNA, where it nucleates assembly of the 50S subunit. Functionally, one of the proteins that surrounds the polypeptide exit tunnel on the outside of the subunit. In Leifsonia xyli subsp. xyli (strain CTCB07), this protein is Large ribosomal subunit protein uL24.